The sequence spans 689 residues: Protein SDA1 homolog (689 aa).

Residues Lys-254 to Asp-319 adopt a coiled-coil conformation. Disordered stretches follow at residues Glu-485–Trp-512 and Lys-606–Lys-689. Basic and acidic residues predominate over residues Ser-668–Leu-681.

The protein belongs to the SDA1 family.

Its subcellular location is the nucleus. The protein localises to the nucleolus. Required for 60S pre-ribosomal subunits export to the cytoplasm. The chain is Protein SDA1 homolog (sdad1) from Xenopus tropicalis (Western clawed frog).